We begin with the raw amino-acid sequence, 906 residues long: Protein translocase subunit SecA (906 aa).

Residues Gln-89, 107–111, and Asp-502 contribute to the ATP site; that span reads GEGKT. Positions 885, 887, 896, and 897 each coordinate Zn(2+).

It belongs to the SecA family. As to quaternary structure, monomer and homodimer. Part of the essential Sec protein translocation apparatus which comprises SecA, SecYEG and auxiliary proteins SecDF-YajC and YidC. Zn(2+) is required as a cofactor.

The protein localises to the cell inner membrane. The protein resides in the cytoplasm. It carries out the reaction ATP + H2O + cellular proteinSide 1 = ADP + phosphate + cellular proteinSide 2.. In terms of biological role, part of the Sec protein translocase complex. Interacts with the SecYEG preprotein conducting channel. Has a central role in coupling the hydrolysis of ATP to the transfer of proteins into and across the cell membrane, serving both as a receptor for the preprotein-SecB complex and as an ATP-driven molecular motor driving the stepwise translocation of polypeptide chains across the membrane. The sequence is that of Protein translocase subunit SecA from Rhizobium rhizogenes (strain K84 / ATCC BAA-868) (Agrobacterium radiobacter).